The sequence spans 407 residues: Transcriptional regulator alnR (407 aa).

A DNA-binding region (zn(2)-C6 fungal-type) is located at residues 23 to 53 (SCDTCQEAKVKCSQHKPSCHRCLRHRQPCVY). The interval 53-85 (YSPQRRSGRPPKRPSPSSRLGPESNNSGDDIHN) is disordered. Positions 75 to 85 (ESNNSGDDIHN) are enriched in polar residues.

It localises to the nucleus. Its function is as follows. Transcriptional regulator involved in the positive regulation of the expression of the gene cluster that mediates the biosynthesis of asperlin, a polyketide showing anti-inflammatory, antitumor and antibiotic activities. This Emericella nidulans (strain FGSC A4 / ATCC 38163 / CBS 112.46 / NRRL 194 / M139) (Aspergillus nidulans) protein is Transcriptional regulator alnR.